Here is a 417-residue protein sequence, read N- to C-terminus: Serine hydroxymethyltransferase (417 aa).

Residues Leu121 and 125 to 127 contribute to the (6S)-5,6,7,8-tetrahydrofolate site; that span reads GHL. Lys229 is subject to N6-(pyridoxal phosphate)lysine. 355–357 is a binding site for (6S)-5,6,7,8-tetrahydrofolate; that stretch reads SPF.

Belongs to the SHMT family. Homodimer. Pyridoxal 5'-phosphate is required as a cofactor.

The protein localises to the cytoplasm. The catalysed reaction is (6R)-5,10-methylene-5,6,7,8-tetrahydrofolate + glycine + H2O = (6S)-5,6,7,8-tetrahydrofolate + L-serine. It participates in one-carbon metabolism; tetrahydrofolate interconversion. The protein operates within amino-acid biosynthesis; glycine biosynthesis; glycine from L-serine: step 1/1. Its function is as follows. Catalyzes the reversible interconversion of serine and glycine with tetrahydrofolate (THF) serving as the one-carbon carrier. This reaction serves as the major source of one-carbon groups required for the biosynthesis of purines, thymidylate, methionine, and other important biomolecules. Also exhibits THF-independent aldolase activity toward beta-hydroxyamino acids, producing glycine and aldehydes, via a retro-aldol mechanism. The chain is Serine hydroxymethyltransferase from Shewanella oneidensis (strain ATCC 700550 / JCM 31522 / CIP 106686 / LMG 19005 / NCIMB 14063 / MR-1).